The sequence spans 195 residues: ATP-dependent Clp protease proteolytic subunit (195 aa).

Residue S99 is the Nucleophile of the active site. Residue H124 is part of the active site.

This sequence belongs to the peptidase S14 family. In terms of assembly, fourteen ClpP subunits assemble into 2 heptameric rings which stack back to back to give a disk-like structure with a central cavity, resembling the structure of eukaryotic proteasomes.

The protein localises to the cytoplasm. The catalysed reaction is Hydrolysis of proteins to small peptides in the presence of ATP and magnesium. alpha-casein is the usual test substrate. In the absence of ATP, only oligopeptides shorter than five residues are hydrolyzed (such as succinyl-Leu-Tyr-|-NHMec, and Leu-Tyr-Leu-|-Tyr-Trp, in which cleavage of the -Tyr-|-Leu- and -Tyr-|-Trp bonds also occurs).. Its function is as follows. Cleaves peptides in various proteins in a process that requires ATP hydrolysis. Has a chymotrypsin-like activity. Plays a major role in the degradation of misfolded proteins. In Coxiella burnetii (strain CbuG_Q212) (Coxiella burnetii (strain Q212)), this protein is ATP-dependent Clp protease proteolytic subunit.